The primary structure comprises 625 residues: Threonine--tRNA ligase (625 aa).

Positions 1–143 (MRILLIHSDY…ELSRTIIPEG (143 aa)) are editing domain. The catalytic stretch occupies residues 206–505 (PHVKLMLEHE…MQEGKKPMLP (300 aa)). Zn(2+) contacts are provided by Cys298, His350, and His474.

It belongs to the class-II aminoacyl-tRNA synthetase family. As to quaternary structure, homodimer. The cofactor is Zn(2+).

The protein localises to the cytoplasm. It carries out the reaction tRNA(Thr) + L-threonine + ATP = L-threonyl-tRNA(Thr) + AMP + diphosphate + H(+). Catalyzes the attachment of threonine to tRNA(Thr) in a two-step reaction: L-threonine is first activated by ATP to form Thr-AMP and then transferred to the acceptor end of tRNA(Thr). Also edits incorrectly charged L-seryl-tRNA(Thr). This Pyrococcus horikoshii (strain ATCC 700860 / DSM 12428 / JCM 9974 / NBRC 100139 / OT-3) protein is Threonine--tRNA ligase.